A 92-amino-acid polypeptide reads, in one-letter code: N(2)-fixation sustaining protein CowN (92 aa).

The protein belongs to the CowN family.

In terms of biological role, is required to sustain N(2)-dependent growth in the presence of low levels of carbon monoxide (CO). Probably acts by protecting the N(2) fixation ability of the nitrogenase complex, which is inactivated in the presence of CO. This Cereibacter sphaeroides (strain ATCC 17025 / ATH 2.4.3) (Rhodobacter sphaeroides) protein is N(2)-fixation sustaining protein CowN.